The chain runs to 269 residues: Energy-coupling factor transporter transmembrane protein EcfT (269 aa).

Transmembrane regions (helical) follow at residues 28 to 48 (MIIY…LLLL), 49 to 69 (AFTL…FNGV), 73 to 93 (IGII…GSVL), 109 to 129 (AILI…LTLT), and 246 to 266 (TLAI…KSPS).

The protein belongs to the energy-coupling factor EcfT family. In terms of assembly, forms a stable energy-coupling factor (ECF) transporter complex composed of 2 membrane-embedded substrate-binding proteins (S component), 2 ATP-binding proteins (A component) and 2 transmembrane proteins (T component). May be able to interact with more than 1 S component at a time.

The protein resides in the cell membrane. Its function is as follows. Transmembrane (T) component of an energy-coupling factor (ECF) ABC-transporter complex. Unlike classic ABC transporters this ECF transporter provides the energy necessary to transport a number of different substrates. This Streptococcus equi subsp. equi (strain 4047) protein is Energy-coupling factor transporter transmembrane protein EcfT.